Consider the following 123-residue polypeptide: Large ribosomal subunit protein bL19 (123 aa).

This sequence belongs to the bacterial ribosomal protein bL19 family.

Functionally, this protein is located at the 30S-50S ribosomal subunit interface and may play a role in the structure and function of the aminoacyl-tRNA binding site. This chain is Large ribosomal subunit protein bL19, found in Acinetobacter baylyi (strain ATCC 33305 / BD413 / ADP1).